A 300-amino-acid chain; its full sequence is Sodium/potassium/calcium exchanger 1 (300 aa).

The interval 1–251 is disordered; sequence DPGSQGVGAE…ENEQPLSLEW (251 aa). Composition is skewed to acidic residues over residues 92 to 102, 109 to 119, 126 to 136, 158 to 175, and 215 to 244; these read GEVEGDEDEGE, GEVE…DEGE, and GDSE…EENE. Residues 259–275 form a helical membrane-spanning segment; the sequence is AIYLFLLPIVFPLWLTV.

The protein belongs to the Ca(2+):cation antiporter (CaCA) (TC 2.A.19) family. SLC24A subfamily. The uncleaved signal sequence is required for efficient membrane targeting and proper membrane integration and topology.

Its subcellular location is the cell membrane. The enzyme catalyses Ca(2+)(out) + K(+)(out) + 4 Na(+)(in) = Ca(2+)(in) + K(+)(in) + 4 Na(+)(out). Functionally, calcium, potassium:sodium antiporter that transports 1 Ca(2+) and 1 K(+) in exchange for 4 Na(+). Critical component of the visual transduction cascade, controlling the calcium concentration of outer segments during light and darkness. Light causes a rapid lowering of cytosolic free calcium in the outer segment of both retinal rod and cone photoreceptors and the light-induced lowering of calcium is caused by extrusion via this protein which plays a key role in the process of light adaptation. The sequence is that of Sodium/potassium/calcium exchanger 1 (SLC24A1) from Bison bison (American bison).